A 175-amino-acid chain; its full sequence is Adenine phosphoribosyltransferase (175 aa).

Belongs to the purine/pyrimidine phosphoribosyltransferase family. In terms of assembly, homodimer.

It is found in the cytoplasm. The enzyme catalyses AMP + diphosphate = 5-phospho-alpha-D-ribose 1-diphosphate + adenine. Its pathway is purine metabolism; AMP biosynthesis via salvage pathway; AMP from adenine: step 1/1. Functionally, catalyzes a salvage reaction resulting in the formation of AMP, that is energically less costly than de novo synthesis. The protein is Adenine phosphoribosyltransferase of Caldicellulosiruptor bescii (strain ATCC BAA-1888 / DSM 6725 / KCTC 15123 / Z-1320) (Anaerocellum thermophilum).